Reading from the N-terminus, the 449-residue chain is RNA binding protein fox-1 homolog 2 (449 aa).

The segment covering 1–21 (MAEGGQAQQQPPQLGPGAAAR) has biased composition (low complexity). The interval 1-186 (MAEGGQAQQQ…STPKRLHVSN (186 aa)) is disordered. Composition is skewed to polar residues over residues 77 to 86 (QGNQEPTTTP) and 118 to 138 (YAGQ…PHGE). Residues 139–176 (QSSNSPSNQNGSLTQTEGGAQTDGQQSQTQSSENSESK) show a composition bias toward low complexity. Positions 180-256 (KRLHVSNIPF…RKIEVNNATA (77 aa)) constitute an RRM domain. Omega-N-methylarginine is present on residues R236, G241, Y268, and K273. An asymmetric dimethylarginine mark is found at E285 and P317. 5 positions are modified to omega-N-methylarginine: L318, L323, A336, R340, and G341. Residues R356 and R388 each carry the asymmetric dimethylarginine modification. Asymmetric dimethylarginine; alternate is present on residues R440 and R445. Omega-N-methylarginine; alternate occurs at positions 440 and 445.

As to quaternary structure, interacts with ER-alpha N-terminal activation domain. Interacts with RBPMS; the interaction allows cooperative assembly of stable cell-specific alternative splicing regulatory complexes. In terms of tissue distribution, detected in brain neurons (at protein level). Detected in heart, brain, embryo, lung, liver, kidney and ovary.

It is found in the nucleus. The protein localises to the cytoplasm. In terms of biological role, RNA-binding protein that regulates alternative splicing events by binding to 5'-UGCAUGU-3' elements. Prevents binding of U2AF2 to the 3'-splice site. Regulates alternative splicing of tissue-specific exons and of differentially spliced exons during erythropoiesis. Seems to act as a coregulatory factor of ER-alpha. Together with RNA binding proteins RBPMS and MBNL1/2, activates vascular smooth muscle cells alternative splicing events. The polypeptide is RNA binding protein fox-1 homolog 2 (Rbfox2) (Mus musculus (Mouse)).